Reading from the N-terminus, the 279-residue chain is Large ribosomal subunit protein uL2 (279 aa).

A disordered region spans residues 223–279 (MAMNPVDHPMGGGEGKSKSGGGRKHPKSPWGQLAKGLKTRNKKKASSKLIVRGRKSK). Residues 232-242 (MGGGEGKSKSG) show a composition bias toward gly residues. Residues 259–279 (LKTRNKKKASSKLIVRGRKSK) show a composition bias toward basic residues.

The protein belongs to the universal ribosomal protein uL2 family. Part of the 50S ribosomal subunit. Forms a bridge to the 30S subunit in the 70S ribosome.

Its function is as follows. One of the primary rRNA binding proteins. Required for association of the 30S and 50S subunits to form the 70S ribosome, for tRNA binding and peptide bond formation. It has been suggested to have peptidyltransferase activity; this is somewhat controversial. Makes several contacts with the 16S rRNA in the 70S ribosome. The polypeptide is Large ribosomal subunit protein uL2 (Prosthecochloris aestuarii (strain DSM 271 / SK 413)).